Reading from the N-terminus, the 130-residue chain is Small ribosomal subunit protein uS11 (130 aa).

The protein belongs to the universal ribosomal protein uS11 family. Part of the 30S ribosomal subunit. Interacts with proteins S7 and S18. Binds to IF-3.

Its function is as follows. Located on the platform of the 30S subunit, it bridges several disparate RNA helices of the 16S rRNA. Forms part of the Shine-Dalgarno cleft in the 70S ribosome. This chain is Small ribosomal subunit protein uS11, found in Blochmanniella floridana.